The chain runs to 376 residues: Eugenol O-methyltransferase (376 aa).

S-adenosyl-L-methionine is bound by residues Gly-219, Asp-242, Met-263, and Lys-276. The active-site Proton acceptor is His-280.

Belongs to the class I-like SAM-binding methyltransferase superfamily. Cation-independent O-methyltransferase family. COMT subfamily. As to quaternary structure, homodimer. Expressed predominantly in root hairs.

The catalysed reaction is (E)-isoeugenol + S-adenosyl-L-methionine = (E)-isomethyleugenol + S-adenosyl-L-homocysteine + H(+). Functionally, O-methyltransferase. Substrate preference is eugenol &gt;&gt; orcinol monomethyl ether &gt; resorcinol monomethyl ether. This is Eugenol O-methyltransferase (EOMT) from Sorghum bicolor (Sorghum).